Consider the following 559-residue polypeptide: MAAQGFLLIASFLLILLVLAKPLGSGLARLIAAVPLPGVAGIERILWRTLGITDHEMNWRQYLLALLTLNLLGLGILFCLLFWQEWLPLNPQRLPGLSGDLALNTAVSFVTNTNWQAYSGESTLSYFSQMAGLTVQNFLSAATGIAVVFALIRAFTRQNVHTLGNAWQDLVRITLWILFPVALIIALFFIQQGVPQNLSAYQPITTLEGAKQLLPMGPVASQEAIKMLGTNGGGFFNANSSHPFENPTALTNLAQMLAIFLIPAALCFAFGEAAGDRCQGRALLWAMSFIFVVCVAVVMWAEVQGNPHLLAAGADSSVNMEGKETRFGVLASSLFAVVTTAASCGAVNAMHDSFTALGGMVPMWLMQIGEVVFGGVGSGLYGMLLFVLLAVFIAGLMIGRTPEYLGKKIDVREMKMTALAILVTPMLVLLGSALAMMTDAGRSAMLNPGPHGFSEVLYAVSSAANNNGSAFAGLSANSPFWNCLLAFCMFVGRFGVIIPVMAIAGSLVSKKVQPASQGTLATHGALFIGLLIGTVLLVGALTFIPALALGPVAEHFSLP.

Transmembrane regions (helical) follow at residues 5 to 25, 27 to 47, 63 to 83, 132 to 152, 170 to 190, 253 to 273, 283 to 303, 327 to 347, 356 to 376, 379 to 399, 416 to 436, 484 to 504, and 524 to 544; these read GFLL…PLGS, LARL…RILW, LLAL…LLFW, GLTV…FALI, LVRI…LFFI, LAQM…FGEA, LLWA…WAEV, FGVL…CGAV, ALGG…FGGV, GLYG…LMIG, MTAL…ALAM, LLAF…MAIA, and GALF…LTFI.

It belongs to the KdpA family. In terms of assembly, the system is composed of three essential subunits: KdpA, KdpB and KdpC.

Its subcellular location is the cell inner membrane. Its function is as follows. Part of the high-affinity ATP-driven potassium transport (or Kdp) system, which catalyzes the hydrolysis of ATP coupled with the electrogenic transport of potassium into the cytoplasm. This subunit binds the periplasmic potassium ions and delivers the ions to the membrane domain of KdpB through an intramembrane tunnel. The sequence is that of Potassium-transporting ATPase potassium-binding subunit from Salmonella typhimurium (strain LT2 / SGSC1412 / ATCC 700720).